Consider the following 87-residue polypeptide: Retinal rod rhodopsin-sensitive cGMP 3',5'-cyclic phosphodiesterase subunit gamma (87 aa).

N-acetylmethionine is present on methionine 1. Residues 1–12 (MNLEPPKGEIRS) are compositionally biased toward basic and acidic residues. The segment at 1–55 (MNLEPPKGEIRSATRVIGGPVTPRKGPPKFKQRQTRQFKSKPPKKGVQGFGDDIP) is disordered. Residues 26 to 44 (GPPKFKQRQTRQFKSKPPK) are compositionally biased toward basic residues.

Belongs to the rod/cone cGMP-PDE gamma subunit family. Oligomer composed of two catalytic chains (alpha and beta), an inhibitory chain (gamma) and the delta chain.

The catalysed reaction is 3',5'-cyclic GMP + H2O = GMP + H(+). Participates in processes of transmission and amplification of the visual signal. cGMP-PDEs are the effector molecules in G-protein-mediated phototransduction in vertebrate rods and cones. This Mus musculus (Mouse) protein is Retinal rod rhodopsin-sensitive cGMP 3',5'-cyclic phosphodiesterase subunit gamma (Pde6g).